Reading from the N-terminus, the 251-residue chain is Ubiquinone/menaquinone biosynthesis C-methyltransferase UbiE (251 aa).

S-adenosyl-L-methionine is bound by residues Thr74, Asp95, 123 to 124 (NA), and Ser140.

It belongs to the class I-like SAM-binding methyltransferase superfamily. MenG/UbiE family.

The enzyme catalyses a 2-demethylmenaquinol + S-adenosyl-L-methionine = a menaquinol + S-adenosyl-L-homocysteine + H(+). It catalyses the reaction a 2-methoxy-6-(all-trans-polyprenyl)benzene-1,4-diol + S-adenosyl-L-methionine = a 5-methoxy-2-methyl-3-(all-trans-polyprenyl)benzene-1,4-diol + S-adenosyl-L-homocysteine + H(+). It participates in quinol/quinone metabolism; menaquinone biosynthesis; menaquinol from 1,4-dihydroxy-2-naphthoate: step 2/2. The protein operates within cofactor biosynthesis; ubiquinone biosynthesis. Functionally, methyltransferase required for the conversion of demethylmenaquinol (DMKH2) to menaquinol (MKH2) and the conversion of 2-polyprenyl-6-methoxy-1,4-benzoquinol (DDMQH2) to 2-polyprenyl-3-methyl-6-methoxy-1,4-benzoquinol (DMQH2). This chain is Ubiquinone/menaquinone biosynthesis C-methyltransferase UbiE, found in Enterobacter sp. (strain 638).